The chain runs to 195 residues: ATP synthase subunit b (195 aa).

Residues 28 to 48 (IFPNVYVLIAHVISLIFLLLL) traverse the membrane as a helical segment.

This sequence belongs to the ATPase B chain family. As to quaternary structure, F-type ATPases have 2 components, F(1) - the catalytic core - and F(0) - the membrane proton channel. F(1) has five subunits: alpha(3), beta(3), gamma(1), delta(1), epsilon(1). F(0) has three main subunits: a(1), b(2) and c(10-14). The alpha and beta chains form an alternating ring which encloses part of the gamma chain. F(1) is attached to F(0) by a central stalk formed by the gamma and epsilon chains, while a peripheral stalk is formed by the delta and b chains.

It is found in the cell membrane. Functionally, f(1)F(0) ATP synthase produces ATP from ADP in the presence of a proton or sodium gradient. F-type ATPases consist of two structural domains, F(1) containing the extramembraneous catalytic core and F(0) containing the membrane proton channel, linked together by a central stalk and a peripheral stalk. During catalysis, ATP synthesis in the catalytic domain of F(1) is coupled via a rotary mechanism of the central stalk subunits to proton translocation. Its function is as follows. Component of the F(0) channel, it forms part of the peripheral stalk, linking F(1) to F(0). The polypeptide is ATP synthase subunit b (Malacoplasma penetrans (strain HF-2) (Mycoplasma penetrans)).